The sequence spans 378 residues: Erythronate-4-phosphate dehydrogenase (378 aa).

The substrate site is built by Ser-45 and Thr-66. Residues Asp-146 and Thr-175 each coordinate NAD(+). Arg-208 is a catalytic residue. Residue Asp-232 participates in NAD(+) binding. The active site involves Glu-237. His-254 (proton donor) is an active-site residue. Position 257 (Gly-257) interacts with NAD(+). Substrate is bound at residue Tyr-258.

This sequence belongs to the D-isomer specific 2-hydroxyacid dehydrogenase family. PdxB subfamily. Homodimer.

It is found in the cytoplasm. It carries out the reaction 4-phospho-D-erythronate + NAD(+) = (R)-3-hydroxy-2-oxo-4-phosphooxybutanoate + NADH + H(+). It participates in cofactor biosynthesis; pyridoxine 5'-phosphate biosynthesis; pyridoxine 5'-phosphate from D-erythrose 4-phosphate: step 2/5. In terms of biological role, catalyzes the oxidation of erythronate-4-phosphate to 3-hydroxy-2-oxo-4-phosphonooxybutanoate. This Escherichia coli O157:H7 protein is Erythronate-4-phosphate dehydrogenase.